We begin with the raw amino-acid sequence, 304 residues long: MSHLLTMSELSEVEISEILKDAEDFANGKESKTTEQTFVANLFFENSTRTRFSFEVAEKRLGLDVLNFSADASSVQKGETLYDTIRTLESIGTKAVIVRHEQDRYFDELKDQVNIPILNAGDGCGNHPTQCLLDLLTIKQEFGRFEGLKIAIVGDVRHSRVARSNAEALTKLGATIYFASPEEWKDEDSTFGTYKPLDELVPEVDVMMLLRVQHERHDHYETDIMKEYHERHGLTVEREKRMKEGSIIMHPAPVNRDVEVASELVECERSRIFKQMENGVYVRMAVLKRALPNVLGGMKHELLV.

Positions 49 and 50 each coordinate carbamoyl phosphate. Lys77 is a binding site for L-aspartate. Carbamoyl phosphate is bound by residues Arg99, His127, and Gln130. L-aspartate contacts are provided by Arg160 and Arg211. Carbamoyl phosphate-binding residues include Ala252 and Pro253.

This sequence belongs to the aspartate/ornithine carbamoyltransferase superfamily. ATCase family. In terms of assembly, heterododecamer (2C3:3R2) of six catalytic PyrB chains organized as two trimers (C3), and six regulatory PyrI chains organized as three dimers (R2).

It carries out the reaction carbamoyl phosphate + L-aspartate = N-carbamoyl-L-aspartate + phosphate + H(+). The protein operates within pyrimidine metabolism; UMP biosynthesis via de novo pathway; (S)-dihydroorotate from bicarbonate: step 2/3. Its function is as follows. Catalyzes the condensation of carbamoyl phosphate and aspartate to form carbamoyl aspartate and inorganic phosphate, the committed step in the de novo pyrimidine nucleotide biosynthesis pathway. This is Aspartate carbamoyltransferase catalytic subunit from Bacillus cereus (strain G9842).